We begin with the raw amino-acid sequence, 578 residues long: Hyaluronan synthase 1 (578 aa).

The Cytoplasmic portion of the chain corresponds to 1 to 25; that stretch reads MRQQDAPKPTPAACRCSGLARRVLT. A helical membrane pass occupies residues 26-46; the sequence is IAFALLILGLMTWAYAAGVPL. Residues 47 to 52 lie on the Extracellular side of the membrane; the sequence is ASDRYG. A helical transmembrane segment spans residues 53-73; sequence LLAFGLYGAFLSAHLVAQSLF. The Cytoplasmic segment spans residues 74–399; that stretch reads AYLEHRRVAA…NALWWHRHHA (326 aa). A helical membrane pass occupies residues 400–420; the sequence is WMTYEAVVSGLFPFFVAATVL. Topologically, residues 421–430 are extracellular; the sequence is RLFYAGRPWA. A helical transmembrane segment spans residues 431–451; it reads LLWVLLCVQGVALAKAAFAAW. At 452–457 the chain is on the cytoplasmic side; sequence LRGCLR. A helical transmembrane segment spans residues 458–478; the sequence is MVLLSLYAPLYMCGLLPAKFL. Residues 479-497 are Extracellular-facing; the sequence is ALVTMNQSGWGTSGRRKLA. The chain crosses the membrane as a helical span at residues 498–518; it reads ANYVPLLPLALWALLLLGGLV. Over 519-540 the chain is Cytoplasmic; the sequence is RSVAHEARADWSGPSRAAEAYH. The helical transmembrane segment at 541–561 threads the bilayer; it reads LAAGAGAYVGYWVAMLTLYWV. Residues 562 to 578 are Extracellular-facing; it reads GVRRLCRRRTGGYRVQV.

Belongs to the NodC/HAS family. The cofactor is Mg(2+). Widely expressed. Highly expressed in ovary followed by spleen, thymus, prostate, testes and large intestine. Weakly expressed in small intestine.

It is found in the membrane. The catalysed reaction is [hyaluronan](n) + UDP-N-acetyl-alpha-D-glucosamine = N-acetyl-beta-D-glucosaminyl-(1-&gt;4)-[hyaluronan](n) + UDP + H(+). It carries out the reaction N-acetyl-beta-D-glucosaminyl-(1-&gt;4)-[hyaluronan](n) + UDP-alpha-D-glucuronate = [hyaluronan](n+1) + UDP + H(+). Its pathway is glycan biosynthesis; hyaluronan biosynthesis. Functionally, catalyzes the addition of GlcNAc or GlcUA monosaccharides to the nascent hyaluronan polymer. Therefore, it is essential to hyaluronan synthesis a major component of most extracellular matrices that has a structural role in tissues architectures and regulates cell adhesion, migration and differentiation. This is one of the isozymes catalyzing that reaction. Also able to catalyze the synthesis of chito-oligosaccharide depending on the substrate. The chain is Hyaluronan synthase 1 (HAS1) from Homo sapiens (Human).